The primary structure comprises 902 residues: Aconitate hydratase A (902 aa).

Residues Cys-441, Cys-507, and Cys-510 each coordinate [4Fe-4S] cluster.

It belongs to the aconitase/IPM isomerase family. As to quaternary structure, monomer. Requires [4Fe-4S] cluster as cofactor.

It catalyses the reaction citrate = D-threo-isocitrate. It carries out the reaction (2S,3R)-3-hydroxybutane-1,2,3-tricarboxylate = 2-methyl-cis-aconitate + H2O. The protein operates within carbohydrate metabolism; tricarboxylic acid cycle; isocitrate from oxaloacetate: step 2/2. It participates in organic acid metabolism; propanoate degradation. Its function is as follows. Involved in the catabolism of short chain fatty acids (SCFA) via the tricarboxylic acid (TCA)(acetyl degradation route) and probably the 2-methylcitrate cycle I (propionate degradation route). Catalyzes the reversible isomerization of citrate to isocitrate via cis-aconitate. Also able to catalyze the hydration of cis-homoaconitate to yield (R)-homocitrate, but with a lower efficiency. Could catalyze the hydration of 2-methyl-cis-aconitate to yield (2R,3S)-2-methylisocitrate. The apo form of AcnA functions as a RNA-binding regulatory protein. This Thermus thermophilus (strain ATCC 27634 / DSM 579 / HB8) protein is Aconitate hydratase A (acoA).